We begin with the raw amino-acid sequence, 335 residues long: NADH-ubiquinone oxidoreductase chain 2 (335 aa).

11 helical membrane passes run proline 7–alanine 27, asparagine 28–methionine 48, glycine 58–threonine 78, tryptophan 81–leucine 101, phenylalanine 110–tryptophan 130, asparagine 147–methionine 167, threonine 174–tyrosine 194, isoleucine 200–leucine 220, methionine 240–proline 260, isoleucine 274–isoleucine 294, and serine 315–leucine 335.

This sequence belongs to the complex I subunit 2 family.

It is found in the mitochondrion inner membrane. The catalysed reaction is a ubiquinone + NADH + 5 H(+)(in) = a ubiquinol + NAD(+) + 4 H(+)(out). Functionally, core subunit of the mitochondrial membrane respiratory chain NADH dehydrogenase (Complex I) that is believed to belong to the minimal assembly required for catalysis. Complex I functions in the transfer of electrons from NADH to the respiratory chain. The immediate electron acceptor for the enzyme is believed to be ubiquinone. This is NADH-ubiquinone oxidoreductase chain 2 (ND2) from Lumbricus terrestris (Common earthworm).